The following is a 267-amino-acid chain: Electron transfer flavoprotein subunit beta (267 aa).

Belongs to the ETF beta-subunit/FixA family. In terms of assembly, heterodimer of an alpha and a beta subunit.

Participates in the electron transfer process during N,N-dimethylglycine (DMG) degradation to sarcosine. The sequence is that of Electron transfer flavoprotein subunit beta from Chromohalobacter salexigens (strain ATCC BAA-138 / DSM 3043 / CIP 106854 / NCIMB 13768 / 1H11).